A 70-amino-acid polypeptide reads, in one-letter code: Small ribosomal subunit protein bS21 (70 aa).

The protein belongs to the bacterial ribosomal protein bS21 family.

The protein is Small ribosomal subunit protein bS21 of Campylobacter fetus subsp. fetus (strain 82-40).